We begin with the raw amino-acid sequence, 258 residues long: L-aminoadipate-semialdehyde dehydrogenase-phosphopantetheinyl transferase (258 aa).

Belongs to the P-Pant transferase superfamily. AcpS family.

The protein localises to the cytoplasm. It localises to the nucleus. It catalyses the reaction apo-[ACP] + CoA = holo-[ACP] + adenosine 3',5'-bisphosphate + H(+). Functionally, catalyzes the transfer of a 4'-phosphopantetheine moiety from coenzyme A to a serine residue of acceptor proteins, such as alpha-aminoadipate reductase. Necessary for alpha-aminoadipate reductase activity. This is L-aminoadipate-semialdehyde dehydrogenase-phosphopantetheinyl transferase (lys7) from Schizosaccharomyces pombe (strain 972 / ATCC 24843) (Fission yeast).